Reading from the N-terminus, the 258-residue chain is Small ribosomal subunit protein uS2 (258 aa).

It belongs to the universal ribosomal protein uS2 family.

The polypeptide is Small ribosomal subunit protein uS2 (Leuconostoc mesenteroides subsp. mesenteroides (strain ATCC 8293 / DSM 20343 / BCRC 11652 / CCM 1803 / JCM 6124 / NCDO 523 / NBRC 100496 / NCIMB 8023 / NCTC 12954 / NRRL B-1118 / 37Y)).